We begin with the raw amino-acid sequence, 512 residues long: Endo-1,4-beta-xylanase A (512 aa).

The signal sequence occupies residues 1-30 (MKRKVKKMAAMATSIIMAIMIILHSIPVLA). The GH11 domain maps to 33–228 (IIYDNETGTH…SSGYANVYKN (196 aa)). Glu-124 functions as the Nucleophile in the catalytic mechanism. The active-site Proton donor is Glu-215. CBM6 domains follow at residues 251–371 (SIIE…FIFS) and 388–508 (SIIQ…FVFS). Residues Glu-254 and Glu-256 each coordinate Ca(2+). A D-xylotriose-binding site is contributed by Thr-271. Arg-276 provides a ligand contact to Ca(2+). Repeat 1 spans residues 279–340 (GYIENGNTVT…SSTGSWNTYQ (62 aa)). Residues 279 to 477 (GYIENGNTVT…GSTGSFDTYR (199 aa)) form a 2 X 61 AA approximate repeats region. D-xylotriose contacts are provided by Tyr-280, Asn-337, and Asn-364. Tyr-280, Asn-337, and Asn-364 together coordinate D-xylobiose. Ca(2+) is bound by residues Asp-366, Gln-391, Glu-393, and Ser-413. Repeat unit 2 spans residues 416 to 477 (GYIENGYSTT…GSTGSFDTYR (62 aa)). 3 residues coordinate D-xylotriose: Tyr-417, Asp-474, and Asn-501. Asp-503 is a binding site for Ca(2+).

It belongs to the glycosyl hydrolase 11 (cellulase G) family.

The enzyme catalyses Endohydrolysis of (1-&gt;4)-beta-D-xylosidic linkages in xylans.. It participates in glycan degradation; xylan degradation. The protein is Endo-1,4-beta-xylanase A (xynA) of Thermoclostridium stercorarium (Clostridium stercorarium).